The primary structure comprises 130 residues: uncharacterized protein (130 aa).

Composition is skewed to polar residues over residues 1 to 27 and 36 to 46; these read MEILNQFSQFSPNMEAQGASSIPQPSQ and QAENQETAKNG. Disordered stretches follow at residues 1-46 and 103-130; these read MEIL…AKNG and VSAQTQKATSVKFDRRRNELDSDEELDL. Residues 27-51 adopt a coiled-coil conformation; sequence QDAHEKARQQAENQETAKNGMISQI.

Belongs to the PDCD5 family.

This is an uncharacterized protein from Caenorhabditis elegans.